The primary structure comprises 887 residues: PAN2-PAN3 deadenylation complex subunit PAN3 (887 aa).

The C3H1-type zinc-finger motif lies at 43 to 71 (GVKLKYCRYYAKDKTCFYGEECQFLHEDP). Disordered regions lie at residues 102–147 (AVAG…IPGM), 284–307 (QTPN…SNVS), and 325–392 (SPAT…SGQV). A compositionally biased stretch (gly residues) spans 122 to 138 (PGTGAAAGGGGSSGGLD). Positions 147-498 (MDGGALTDTS…PPPNRIQKSS (352 aa)) are necessary and sufficient for interaction with PABPC1 but not needed for interaction with PAN2. The short motif at 284–299 (QTPNPTASEFIPKGGS) is the PABPC-interacting motif-2 (PAM-2) element. The span at 298–307 (GSTSRLSNVS) shows a compositional bias: polar residues. 2 positions are modified to phosphoserine: S354 and S361. Positions 363–392 (TPNPASYMVPSSASTSVNNPVSQTPSSGQV) are enriched in polar residues. The segment at 463-750 (QIDQADMPAV…SVNDIMPMIG (288 aa)) is pseudokinase domain. ATP contacts are provided by residues R521, 570–577 (DFHAGGET), and 644–645 (TK). Residues 751-789 (ARFYTQLDAAQMRNDVIEEDLAKEVQNGRLFRLLAKLGT) are a coiled coil. The interval 790 to 887 (INERPEFQKD…ELIAAANGQL (98 aa)) is knob domain.

It belongs to the protein kinase superfamily. PAN3 family. Homodimer. Forms a heterotrimer with a catalytic subunit PAN2 to form the poly(A)-nuclease (PAN) deadenylation complex. Interacts (via PAM-2 motif) with poly(A)-binding protein PABPC1 (via PABC domain), conferring substrate specificity of the enzyme complex. Interacts with the GW182 family proteins TNRC6A, TNRC6B and TNRC6. Interacts with YTHDF3. As to quaternary structure, interacts with PAN2. Interacts (via N-terminus) with PABPC1 at lower efficiency than isoform 3. In terms of assembly, interacts with PAN2. Interacts (via N-terminus) with PABPC1 at higher efficiency than isoform 1.

The protein localises to the cytoplasm. Its subcellular location is the P-body. It localises to the nucleus. In terms of biological role, regulatory subunit of the poly(A)-nuclease (PAN) deadenylation complex, one of two cytoplasmic mRNA deadenylases involved in general and miRNA-mediated mRNA turnover. PAN specifically shortens poly(A) tails of RNA and the activity is stimulated by poly(A)-binding protein (PABP). PAN deadenylation is followed by rapid degradation of the shortened mRNA tails by the CCR4-NOT complex. Deadenylated mRNAs are then degraded by two alternative mechanisms, namely exosome-mediated 3'-5' exonucleolytic degradation, or deadenylation-dependent mRNA decapping and subsequent 5'-3' exonucleolytic degradation by XRN1. PAN3 acts as a regulator for PAN activity, recruiting the catalytic subunit PAN2 to mRNA via its interaction with RNA and PABP, and to miRNA targets via its interaction with GW182 family proteins. Functionally, decreases PAN2-mediated deadenylation, possibly by preventing progression into the second CCR4-NOT mediated stage of biphasic deadenylation. Has a significant effect on mRNA stability, generally stabilizing a subset of the transcriptome. Stabilizes mRNAs degraded by the AU-rich element (ARE)-mediated mRNA decay pathway but promotes degradation of mRNAs by the microRNA-mediated pathway. Its activity influences mRNP remodeling, specifically reducing formation of a subset of P-bodies containing GW220, an isoform of TNRC6A. Its function is as follows. Enhances PAN2 deadenylase activity and has an extensive effect on mRNA stability, generally enhancing mRNA decay across the transcriptome by multiple pathways, including the AU-rich element (ARE)-mediated pathway, microRNA-mediated pathway and the nonsense-mediated pathway (NMD). Its activity is required for efficient P-body formation. May be involved in regulating mRNAs of genes involved in cell cycle progression and cell proliferation. The sequence is that of PAN2-PAN3 deadenylation complex subunit PAN3 from Homo sapiens (Human).